The chain runs to 375 residues: Putrescine N-methyltransferase 1 (375 aa).

Composition is skewed to polar residues over residues 24 to 50 (HQNG…QNGT) and 57 to 77 (HQNG…GNEL). Residues 24 to 77 (HQNGTSEHLNGYQNGTSKHQNGHQNGTFEHRNGHQNGTSEQQNGTISHDNGNEL) are disordered. The region spanning 86 to 323 (PGWFSEFSAL…GVIGYMLCST (238 aa)) is the PABS domain. S-adenosyl-L-methionine-binding positions include Gln-117, Glu-192, and 223–224 (DG). The active-site Proton acceptor is Asp-242. An S-adenosyl-L-methionine-binding site is contributed by Tyr-311.

This sequence belongs to the class I-like SAM-binding methyltransferase superfamily. Putrescine methyltransferase family. In terms of tissue distribution, predominantly expressed in roots.

The enzyme catalyses putrescine + S-adenosyl-L-methionine = N-methylputrescine + S-adenosyl-L-homocysteine + H(+). The protein operates within alkaloid biosynthesis; nicotine biosynthesis. In terms of biological role, involved in the biosynthesis of pyridine alkaloid natural products, leading mainly to the production of anabasine, anatabine, nicotine and nornicotine, effective deterrents against herbivores with antiparasitic and pesticide properties (neurotoxins); nornicotine serves as the precursor in the synthesis of the carcinogen compound N'-nitrosonornicotine (NNN). Methyltransferase that mediates the conversion of putrescine to N-methylputrescine. Promotes leaves ripening. This chain is Putrescine N-methyltransferase 1, found in Nicotiana tabacum (Common tobacco).